Consider the following 235-residue polypeptide: Thaumatin I (235 aa).

Positions 1-22 (MAATTCFFFLFPFLLLLTLSRA) are cleaved as a signal peptide. 8 disulfide bridges follow: Cys31–Cys226, Cys78–Cys88, Cys93–Cys99, Cys143–Cys215, Cys148–Cys199, Cys156–Cys167, Cys171–Cys180, and Cys181–Cys186. A propeptide spans 230–235 (LELEDE) (removed in mature form).

Belongs to the thaumatin family.

It localises to the cytoplasmic vesicle. Taste-modifying protein; intensely sweet-tasting. It is 100000 times sweeter than sucrose on a molar basis. This chain is Thaumatin I, found in Thaumatococcus daniellii (Katemfe).